Consider the following 485-residue polypeptide: Zinc finger protein 639 (485 aa).

The segment covering 1-14 (MNEYPKKRKRKTLH) has biased composition (basic residues). The interval 1-20 (MNEYPKKRKRKTLHPSRYSD) is disordered. Residue Ser60 is modified to Phosphoserine. A Glycyl lysine isopeptide (Lys-Gly) (interchain with G-Cter in SUMO2) cross-link involves residue Lys76. The residue at position 88 (Ser88) is a Phosphoserine. Residues Lys177, Lys181, and Lys226 each participate in a glycyl lysine isopeptide (Lys-Gly) (interchain with G-Cter in SUMO2) cross-link. C2H2-type zinc fingers lie at residues 204-227 (YKCE…ILKH), 233-255 (NVCR…AKLH), 260-283 (YICK…ADTH), 289-311 (YWCE…FQEH), 374-397 (FVCQ…AIEH), 403-425 (HVCD…LNSH), 431-454 (YLCQ…DFKH), and 460-482 (HKCS…LPVH). The tract at residues 371–455 (KNFFVCQVCG…LKIHLDFKHS (85 aa)) is interaction with CTNNA2.

Belongs to the krueppel C2H2-type zinc-finger protein family. As to quaternary structure, interacts with CTNNA2.

The protein localises to the nucleus. In terms of biological role, binds DNA and may function as a transcriptional repressor. This is Zinc finger protein 639 (ZNF639) from Homo sapiens (Human).